We begin with the raw amino-acid sequence, 326 residues long: Biotin synthase (326 aa).

One can recognise a Radical SAM core domain in the interval 51–278 (NEVQRSTLLS…TSYVRLSAGR (228 aa)). Cys66, Cys70, and Cys73 together coordinate [4Fe-4S] cluster. Residues Cys110, Cys141, Cys201, and Arg273 each coordinate [2Fe-2S] cluster.

Belongs to the radical SAM superfamily. Biotin synthase family. In terms of assembly, homodimer. It depends on [4Fe-4S] cluster as a cofactor. Requires [2Fe-2S] cluster as cofactor.

The catalysed reaction is (4R,5S)-dethiobiotin + (sulfur carrier)-SH + 2 reduced [2Fe-2S]-[ferredoxin] + 2 S-adenosyl-L-methionine = (sulfur carrier)-H + biotin + 2 5'-deoxyadenosine + 2 L-methionine + 2 oxidized [2Fe-2S]-[ferredoxin]. It participates in cofactor biosynthesis; biotin biosynthesis; biotin from 7,8-diaminononanoate: step 2/2. Catalyzes the conversion of dethiobiotin (DTB) to biotin by the insertion of a sulfur atom into dethiobiotin via a radical-based mechanism. This chain is Biotin synthase, found in Azoarcus sp. (strain BH72).